A 175-amino-acid chain; its full sequence is Probable S-adenosyl-L-methionine-binding protein VirR (175 aa).

A TsaA-like domain is found at 35–165 (LFFVGKIRTP…DRSLSKPLAP (131 aa)). S-adenosyl-L-methionine is bound by residues 52-54 (PRQ), 90-91 (HE), R114, T124, and 145-148 (LDGT).

It belongs to the tRNA methyltransferase O family.

This chain is Probable S-adenosyl-L-methionine-binding protein VirR (virR), found in Rhizobium radiobacter (Agrobacterium tumefaciens).